The primary structure comprises 357 residues: 3-isopropylmalate dehydrogenase (357 aa).

Residues Arg97, Arg107, Arg135, and Asp224 each coordinate substrate. The Mg(2+) site is built by Asp224, Asp248, and Asp252. 282–294 (GSAPDIAGKNIAN) contributes to the NAD(+) binding site.

This sequence belongs to the isocitrate and isopropylmalate dehydrogenases family. LeuB type 1 subfamily. As to quaternary structure, homodimer. Requires Mg(2+) as cofactor. Mn(2+) is required as a cofactor.

Its subcellular location is the cytoplasm. The enzyme catalyses (2R,3S)-3-isopropylmalate + NAD(+) = 4-methyl-2-oxopentanoate + CO2 + NADH. It functions in the pathway amino-acid biosynthesis; L-leucine biosynthesis; L-leucine from 3-methyl-2-oxobutanoate: step 3/4. In terms of biological role, catalyzes the oxidation of 3-carboxy-2-hydroxy-4-methylpentanoate (3-isopropylmalate) to 3-carboxy-4-methyl-2-oxopentanoate. The product decarboxylates to 4-methyl-2 oxopentanoate. This chain is 3-isopropylmalate dehydrogenase, found in Prochlorococcus marinus (strain MIT 9312).